Here is a 448-residue protein sequence, read N- to C-terminus: Nuclear distribution protein PAC1 (448 aa).

The region spanning 9 to 41 (QAEELHKSIIAYLAANNFQDSVTAMRTELNLGE) is the LisH domain. The disordered stretch occupies residues 74 to 95 (SATPTSLSNRKQDPASWLPAGP). 7 WD repeats span residues 102 to 143 (SHRT…RTVK), 145 to 185 (HTKA…KNIR), 189 to 236 (GHDH…CLKT), 239 to 278 (GHSD…PETK), 283 to 343 (GHEH…IKTL), 345 to 384 (GHDN…KCVK), and 389 to 444 (MHEH…TSLR).

This sequence belongs to the WD repeat LIS1/nudF family. Self-associates. Interacts with NDL1 and dynein.

The protein resides in the cytoplasm. The protein localises to the cytoskeleton. Its subcellular location is the spindle pole. Positively regulates the activity of the minus-end directed microtubule motor protein dynein. May enhance dynein-mediated microtubule sliding by targeting dynein to the microtubule plus end. Required for nuclear migration during vegetative growth as well as development. Required for retrograde early endosome (EE) transport from the hyphal tip. Required for localization of dynein to the mitotic spindle poles. Recruits additional proteins to the dynein complex at SPBs. The protein is Nuclear distribution protein PAC1 of Fusarium vanettenii (strain ATCC MYA-4622 / CBS 123669 / FGSC 9596 / NRRL 45880 / 77-13-4) (Fusarium solani subsp. pisi).